The sequence spans 247 residues: E3 ubiquitin-protein ligase RNF182 (247 aa).

Residues 20 to 68 (CKICYNRYNLKQRKPKVLECCHRVCAKCLYKIIDFGDSPQGVIVCPFCR) form an RING-type zinc finger. 2 helical membrane passes run 184-204 (VLVWLLGLLYFSSLPLGIYLL) and 211-231 (LGVVFVSLVPSSLVILMVYGF).

As to quaternary structure, interacts with ATP6V0C.

Its subcellular location is the membrane. The protein localises to the cytoplasm. The catalysed reaction is S-ubiquitinyl-[E2 ubiquitin-conjugating enzyme]-L-cysteine + [acceptor protein]-L-lysine = [E2 ubiquitin-conjugating enzyme]-L-cysteine + N(6)-ubiquitinyl-[acceptor protein]-L-lysine.. It participates in protein modification; protein ubiquitination. Its function is as follows. E3 ubiquitin-protein ligase that mediates the ubiquitination of ATP6V0C and targets it to degradation via the ubiquitin-proteasome pathway. Also plays a role in the inhibition of TLR-triggered innate immune response by mediating 'Lys'-48-linked ubiquitination and subsequent degradation of NF-kappa-B component RELA. This Rattus norvegicus (Rat) protein is E3 ubiquitin-protein ligase RNF182 (Rnf182).